We begin with the raw amino-acid sequence, 150 residues long: D-aminoacyl-tRNA deacylase (150 aa).

Residues 138-139 (GP) carry the Gly-cisPro motif, important for rejection of L-amino acids motif.

Belongs to the DTD family. As to quaternary structure, homodimer.

The protein localises to the cytoplasm. It catalyses the reaction glycyl-tRNA(Ala) + H2O = tRNA(Ala) + glycine + H(+). The catalysed reaction is a D-aminoacyl-tRNA + H2O = a tRNA + a D-alpha-amino acid + H(+). Functionally, an aminoacyl-tRNA editing enzyme that deacylates mischarged D-aminoacyl-tRNAs. Also deacylates mischarged glycyl-tRNA(Ala), protecting cells against glycine mischarging by AlaRS. Acts via tRNA-based rather than protein-based catalysis; rejects L-amino acids rather than detecting D-amino acids in the active site. By recycling D-aminoacyl-tRNA to D-amino acids and free tRNA molecules, this enzyme counteracts the toxicity associated with the formation of D-aminoacyl-tRNA entities in vivo and helps enforce protein L-homochirality. The polypeptide is D-aminoacyl-tRNA deacylase (Sorangium cellulosum (strain So ce56) (Polyangium cellulosum (strain So ce56))).